Reading from the N-terminus, the 200-residue chain is NADH-quinone oxidoreductase subunit C (200 aa).

This sequence belongs to the complex I 30 kDa subunit family. As to quaternary structure, NDH-1 is composed of 14 different subunits. Subunits NuoB, C, D, E, F, and G constitute the peripheral sector of the complex.

Its subcellular location is the cell inner membrane. It carries out the reaction a quinone + NADH + 5 H(+)(in) = a quinol + NAD(+) + 4 H(+)(out). Functionally, NDH-1 shuttles electrons from NADH, via FMN and iron-sulfur (Fe-S) centers, to quinones in the respiratory chain. The immediate electron acceptor for the enzyme in this species is believed to be ubiquinone. Couples the redox reaction to proton translocation (for every two electrons transferred, four hydrogen ions are translocated across the cytoplasmic membrane), and thus conserves the redox energy in a proton gradient. This is NADH-quinone oxidoreductase subunit C from Burkholderia vietnamiensis (strain G4 / LMG 22486) (Burkholderia cepacia (strain R1808)).